The primary structure comprises 467 residues: 26S proteasome regulatory subunit 7 homolog (467 aa).

Disordered regions lie at residues Met1–Ile26 and Gly108–Asp140. Positions Thr117–Thr134 are enriched in low complexity. Residues Ser164 and Ser231 each carry the phosphoserine modification. An ATP-binding site is contributed by Gly250–Thr257.

Belongs to the AAA ATPase family. Interacts with UBR1 and CIC1. In terms of processing, the N-terminus is blocked.

Its subcellular location is the cytoplasm. It localises to the nucleus. Functionally, the 26S proteasome is involved in the ATP-dependent degradation of ubiquitinated proteins. The regulatory (or ATPase) complex confers ATP dependency and substrate specificity to the 26S complex. This chain is 26S proteasome regulatory subunit 7 homolog (RPT1), found in Saccharomyces cerevisiae (strain ATCC 204508 / S288c) (Baker's yeast).